The sequence spans 242 residues: Ribosomal RNA large subunit methyltransferase E (242 aa).

S-adenosyl-L-methionine contacts are provided by Gly-64, Trp-66, Asp-84, Asp-100, and Asp-125. Lys-165 functions as the Proton acceptor in the catalytic mechanism. Positions 198–242 (SSETFLLGRGLKKASPNGLDSRSGTAAEPAPLVPIGTNSMPANGD) are disordered. The segment covering 233–242 (GTNSMPANGD) has biased composition (polar residues).

It belongs to the class I-like SAM-binding methyltransferase superfamily. RNA methyltransferase RlmE family.

The protein localises to the cytoplasm. It catalyses the reaction uridine(2552) in 23S rRNA + S-adenosyl-L-methionine = 2'-O-methyluridine(2552) in 23S rRNA + S-adenosyl-L-homocysteine + H(+). Functionally, specifically methylates the uridine in position 2552 of 23S rRNA at the 2'-O position of the ribose in the fully assembled 50S ribosomal subunit. This is Ribosomal RNA large subunit methyltransferase E from Verminephrobacter eiseniae (strain EF01-2).